We begin with the raw amino-acid sequence, 202 residues long: Small ribosomal subunit protein uS4c-1 (202 aa).

Residues 90-152 form the S4 RNA-binding domain; that stretch reads MRLDNIVLRA…NKSRQLIDLN (63 aa).

It belongs to the universal ribosomal protein uS4 family. As to quaternary structure, part of the 30S ribosomal subunit. Contacts protein S5. The interaction surface between S4 and S5 is involved in control of translational fidelity.

It localises to the plastid. The protein resides in the chloroplast. In terms of biological role, one of the primary rRNA binding proteins, it binds directly to 16S rRNA where it nucleates assembly of the body of the 30S subunit. With S5 and S12 plays an important role in translational accuracy. The sequence is that of Small ribosomal subunit protein uS4c-1 from Cyanidium caldarium (Red alga).